We begin with the raw amino-acid sequence, 943 residues long: Aconitate hydratase A (943 aa).

[4Fe-4S] cluster contacts are provided by Cys479, Cys545, and Cys548.

This sequence belongs to the aconitase/IPM isomerase family. As to quaternary structure, monomer. The cofactor is [4Fe-4S] cluster.

It catalyses the reaction citrate = D-threo-isocitrate. It carries out the reaction (2S,3R)-3-hydroxybutane-1,2,3-tricarboxylate = 2-methyl-cis-aconitate + H2O. The protein operates within carbohydrate metabolism; tricarboxylic acid cycle; isocitrate from oxaloacetate: step 2/2. It participates in organic acid metabolism; propanoate degradation. Its function is as follows. Involved in the catabolism of short chain fatty acids (SCFA) via the tricarboxylic acid (TCA)(acetyl degradation route) and probably via the 2-methylcitrate cycle I (propionate degradation route). Catalyzes the reversible isomerization of citrate to isocitrate via cis-aconitate. The apo form of AcnA functions as a RNA-binding regulatory protein which binds to selected IRE-like sequences present within the UTRs (untranslated regions) of 3' trxC and 5' IdeR mRNA. Could catalyze the hydration of 2-methyl-cis-aconitate to yield (2R,3S)-2-methylisocitrate. This Mycobacterium tuberculosis (strain ATCC 25618 / H37Rv) protein is Aconitate hydratase A (acn).